Consider the following 457-residue polypeptide: Glutamate--tRNA ligase 1 (457 aa).

Positions 9–19 (PSPTGYIHIGN) match the 'HIGH' region motif. The 'KMSKS' region signature appears at 250–254 (GLSKR). Lys253 is a binding site for ATP.

It belongs to the class-I aminoacyl-tRNA synthetase family. Glutamate--tRNA ligase type 1 subfamily. Monomer.

It is found in the cytoplasm. It catalyses the reaction tRNA(Glu) + L-glutamate + ATP = L-glutamyl-tRNA(Glu) + AMP + diphosphate. Catalyzes the attachment of glutamate to tRNA(Glu) in a two-step reaction: glutamate is first activated by ATP to form Glu-AMP and then transferred to the acceptor end of tRNA(Glu). The sequence is that of Glutamate--tRNA ligase 1 from Brucella ovis (strain ATCC 25840 / 63/290 / NCTC 10512).